The primary structure comprises 196 residues: uncharacterized protein (196 aa).

2 CBS domains span residues 10–69 and 76–132; these read ARRD…NPDE and MSQP…LVAT. The ACP-type MB domain maps to 153–187; that stretch reads IIEGVCDLCETYSEELRFVDGVWVCPECYEDILGR. Positions 158, 161, 177, and 180 each coordinate Fe cation. Residues C158, C161, C177, and C180 each coordinate Zn(2+).

This is an uncharacterized protein from Methanopyrus kandleri (strain AV19 / DSM 6324 / JCM 9639 / NBRC 100938).